The chain runs to 202 residues: MSEAIAIAAELRDGSGKGAARATRRAGKVPGVIYGDKKAAICIQMDPRVVWAQISKTGFFTQLFNVDLGKDGKHLCLARDVQMHPVTDQPIHVDFMRVSADHAIHVKVPVHFTNELKSPGIKKGGVLNVELHEIEITCSPNDIPHEILIDLDGLEIGASIHLSDLKLPAGAKPYHVASGATVASIAAPTVARAETTETEAAG.

Belongs to the bacterial ribosomal protein bL25 family. CTC subfamily. As to quaternary structure, part of the 50S ribosomal subunit; part of the 5S rRNA/L5/L18/L25 subcomplex. Contacts the 5S rRNA. Binds to the 5S rRNA independently of L5 and L18.

This is one of the proteins that binds to the 5S RNA in the ribosome where it forms part of the central protuberance. This is Large ribosomal subunit protein bL25 from Paramagnetospirillum magneticum (strain ATCC 700264 / AMB-1) (Magnetospirillum magneticum).